The sequence spans 207 residues: LexA repressor (207 aa).

The segment at residues 28 to 48 (VREIGEAVGLASSSTVHGHLS) is a DNA-binding region (H-T-H motif). Residues Ser-130 and Lys-168 each act as for autocatalytic cleavage activity in the active site.

The protein belongs to the peptidase S24 family. In terms of assembly, homodimer.

It catalyses the reaction Hydrolysis of Ala-|-Gly bond in repressor LexA.. In terms of biological role, represses a number of genes involved in the response to DNA damage (SOS response), including recA and lexA. In the presence of single-stranded DNA, RecA interacts with LexA causing an autocatalytic cleavage which disrupts the DNA-binding part of LexA, leading to derepression of the SOS regulon and eventually DNA repair. The chain is LexA repressor from Staphylococcus carnosus (strain TM300).